Reading from the N-terminus, the 305-residue chain is Ferredoxin--NADP reductase (305 aa).

Positions 31, 42, 82, and 274 each coordinate FAD.

It belongs to the ferredoxin--NADP reductase type 2 family. Homodimer. FAD serves as cofactor.

It catalyses the reaction 2 reduced [2Fe-2S]-[ferredoxin] + NADP(+) + H(+) = 2 oxidized [2Fe-2S]-[ferredoxin] + NADPH. This Ignicoccus hospitalis (strain KIN4/I / DSM 18386 / JCM 14125) protein is Ferredoxin--NADP reductase.